A 122-amino-acid chain; its full sequence is UPF0102 protein CPR_1677 (122 aa).

It belongs to the UPF0102 family.

In Clostridium perfringens (strain SM101 / Type A), this protein is UPF0102 protein CPR_1677.